A 120-amino-acid chain; its full sequence is NAD(P)H-quinone oxidoreductase subunit 3 (120 aa).

3 helical membrane passes run 6-26, 64-84, and 89-109; these read GYDA…LALI, MFAL…PWAV, and LGVL…VALA.

This sequence belongs to the complex I subunit 3 family. As to quaternary structure, NDH-1 can be composed of about 15 different subunits; different subcomplexes with different compositions have been identified which probably have different functions.

It localises to the cellular thylakoid membrane. It catalyses the reaction a plastoquinone + NADH + (n+1) H(+)(in) = a plastoquinol + NAD(+) + n H(+)(out). The enzyme catalyses a plastoquinone + NADPH + (n+1) H(+)(in) = a plastoquinol + NADP(+) + n H(+)(out). In terms of biological role, NDH-1 shuttles electrons from an unknown electron donor, via FMN and iron-sulfur (Fe-S) centers, to quinones in the respiratory and/or the photosynthetic chain. The immediate electron acceptor for the enzyme in this species is believed to be plastoquinone. Couples the redox reaction to proton translocation, and thus conserves the redox energy in a proton gradient. Cyanobacterial NDH-1 also plays a role in inorganic carbon-concentration. This is NAD(P)H-quinone oxidoreductase subunit 3 from Parasynechococcus marenigrum (strain WH8102).